The chain runs to 310 residues: Coproporphyrin III ferrochelatase (310 aa).

Residues His184 and Glu265 each coordinate Fe(2+).

Belongs to the ferrochelatase family.

It is found in the cytoplasm. It catalyses the reaction Fe-coproporphyrin III + 2 H(+) = coproporphyrin III + Fe(2+). Its pathway is porphyrin-containing compound metabolism; protoheme biosynthesis. In terms of biological role, involved in coproporphyrin-dependent heme b biosynthesis. Catalyzes the insertion of ferrous iron into coproporphyrin III to form Fe-coproporphyrin III. The sequence is that of Coproporphyrin III ferrochelatase from Limosilactobacillus reuteri (strain DSM 20016) (Lactobacillus reuteri).